A 225-amino-acid polypeptide reads, in one-letter code: Futalosine hydrolase (225 aa).

The protein belongs to the PNP/UDP phosphorylase family. Futalosine hydrolase subfamily. Homotetramer.

It carries out the reaction futalosine + H2O = dehypoxanthine futalosine + hypoxanthine. It functions in the pathway quinol/quinone metabolism; menaquinone biosynthesis. With respect to regulation, no enhancing of inhibitory effects are observed with divalent metal ions. Slightly inhibited by hypoxanthine. Its function is as follows. Catalyzes the hydrolysis of futalosine (FL) to dehypoxanthine futalosine (DHFL) and hypoxanthine, a step in the biosynthesis of menaquinone (MK, vitamin K2). Is highly specific to futalosine since it does not accept aminodeoxyfutalosine (AFL), or any structurally related nucleotides and nucleosides as substrate. The sequence is that of Futalosine hydrolase from Thermus thermophilus (strain ATCC 27634 / DSM 579 / HB8).